Here is a 569-residue protein sequence, read N- to C-terminus: Ribonuclease J (569 aa).

Residues His81, His83, Asp85, His86, His150, and Asp172 each coordinate Zn(2+). Position 373 to 377 (373 to 377 (HASGH)) interacts with substrate. Residue His399 participates in Zn(2+) binding.

It belongs to the metallo-beta-lactamase superfamily. RNA-metabolizing metallo-beta-lactamase-like family. Bacterial RNase J subfamily. In terms of assembly, homodimer, may be a subunit of the RNA degradosome. Requires Zn(2+) as cofactor.

It localises to the cytoplasm. In terms of biological role, an RNase that has 5'-3' exonuclease and possibly endoonuclease activity. Involved in maturation of rRNA and in some organisms also mRNA maturation and/or decay. The protein is Ribonuclease J of Mycoplasma pneumoniae (strain ATCC 29342 / M129 / Subtype 1) (Mycoplasmoides pneumoniae).